Here is a 325-residue protein sequence, read N- to C-terminus: 4-hydroxy-3-methylbut-2-enyl diphosphate reductase (325 aa).

[4Fe-4S] cluster is bound at residue cysteine 21. Residues histidine 50 and histidine 83 each contribute to the (2E)-4-hydroxy-3-methylbut-2-enyl diphosphate site. The dimethylallyl diphosphate site is built by histidine 50 and histidine 83. Residues histidine 50 and histidine 83 each contribute to the isopentenyl diphosphate site. Cysteine 105 is a [4Fe-4S] cluster binding site. Histidine 133 is a (2E)-4-hydroxy-3-methylbut-2-enyl diphosphate binding site. A dimethylallyl diphosphate-binding site is contributed by histidine 133. Histidine 133 serves as a coordination point for isopentenyl diphosphate. The active-site Proton donor is the glutamate 135. Threonine 173 contacts (2E)-4-hydroxy-3-methylbut-2-enyl diphosphate. Cysteine 203 provides a ligand contact to [4Fe-4S] cluster. The (2E)-4-hydroxy-3-methylbut-2-enyl diphosphate site is built by serine 231, serine 232, asparagine 233, and serine 275. Dimethylallyl diphosphate is bound by residues serine 231, serine 232, asparagine 233, and serine 275. Positions 231, 232, 233, and 275 each coordinate isopentenyl diphosphate.

Belongs to the IspH family. It depends on [4Fe-4S] cluster as a cofactor.

It catalyses the reaction isopentenyl diphosphate + 2 oxidized [2Fe-2S]-[ferredoxin] + H2O = (2E)-4-hydroxy-3-methylbut-2-enyl diphosphate + 2 reduced [2Fe-2S]-[ferredoxin] + 2 H(+). It carries out the reaction dimethylallyl diphosphate + 2 oxidized [2Fe-2S]-[ferredoxin] + H2O = (2E)-4-hydroxy-3-methylbut-2-enyl diphosphate + 2 reduced [2Fe-2S]-[ferredoxin] + 2 H(+). It participates in isoprenoid biosynthesis; dimethylallyl diphosphate biosynthesis; dimethylallyl diphosphate from (2E)-4-hydroxy-3-methylbutenyl diphosphate: step 1/1. Its pathway is isoprenoid biosynthesis; isopentenyl diphosphate biosynthesis via DXP pathway; isopentenyl diphosphate from 1-deoxy-D-xylulose 5-phosphate: step 6/6. Catalyzes the conversion of 1-hydroxy-2-methyl-2-(E)-butenyl 4-diphosphate (HMBPP) into a mixture of isopentenyl diphosphate (IPP) and dimethylallyl diphosphate (DMAPP). Acts in the terminal step of the DOXP/MEP pathway for isoprenoid precursor biosynthesis. The chain is 4-hydroxy-3-methylbut-2-enyl diphosphate reductase from Bordetella pertussis (strain Tohama I / ATCC BAA-589 / NCTC 13251).